The primary structure comprises 290 residues: 33 kDa chaperonin (290 aa).

2 disulfides stabilise this stretch: Cys235–Cys237 and Cys268–Cys271.

It belongs to the HSP33 family. In terms of processing, under oxidizing conditions two disulfide bonds are formed involving the reactive cysteines. Under reducing conditions zinc is bound to the reactive cysteines and the protein is inactive.

Its subcellular location is the cytoplasm. Redox regulated molecular chaperone. Protects both thermally unfolding and oxidatively damaged proteins from irreversible aggregation. Plays an important role in the bacterial defense system toward oxidative stress. The sequence is that of 33 kDa chaperonin from Streptococcus equi subsp. equi (strain 4047).